Consider the following 131-residue polypeptide: Profilin-2 (131 aa).

It belongs to the profilin family. In terms of assembly, occurs in many kinds of cells as a complex with monomeric actin in a 1:1 ratio.

The protein localises to the cytoplasm. It localises to the cytoskeleton. Binds to actin and affects the structure of the cytoskeleton. At high concentrations, profilin prevents the polymerization of actin, whereas it enhances it at low concentrations. By binding to PIP2, it inhibits the formation of IP3 and DG. The sequence is that of Profilin-2 (PRO2) from Triticum aestivum (Wheat).